The following is a 527-amino-acid chain: Probable malate:quinone oxidoreductase 2 (527 aa).

Belongs to the MQO family. It depends on FAD as a cofactor.

The enzyme catalyses (S)-malate + a quinone = a quinol + oxaloacetate. The protein operates within carbohydrate metabolism; tricarboxylic acid cycle; oxaloacetate from (S)-malate (quinone route): step 1/1. This is Probable malate:quinone oxidoreductase 2 from Pseudomonas putida (strain ATCC 47054 / DSM 6125 / CFBP 8728 / NCIMB 11950 / KT2440).